A 365-amino-acid chain; its full sequence is Phosphopantothenate--cysteine ligase CAB2 (365 aa).

The interval 228–250 (QSGDNGKMGANNDTEGTTRTTPD) is disordered. The segment covering 238–248 (NNDTEGTTRTT) has biased composition (polar residues).

It belongs to the PPC synthetase family. As to quaternary structure, homodimer.

It is found in the cytoplasm. The protein localises to the nucleus. The enzyme catalyses (R)-4'-phosphopantothenate + L-cysteine + CTP = N-[(R)-4-phosphopantothenoyl]-L-cysteine + CMP + diphosphate + H(+). Its pathway is cofactor biosynthesis; coenzyme A biosynthesis; CoA from (R)-pantothenate: step 2/5. Catalyzes the first step in the biosynthesis of coenzyme A from vitamin B5, where cysteine is conjugated to 4'-phosphopantothenate to form 4-phosphopantothenoylcysteine. The sequence is that of Phosphopantothenate--cysteine ligase CAB2 (CAB2) from Saccharomyces cerevisiae (strain ATCC 204508 / S288c) (Baker's yeast).